The sequence spans 210 residues: Small ribosomal subunit protein uS4 (210 aa).

Positions 30 to 49 are disordered; sequence EKSSLEKRKYPPGLPPKKKG. Residues 99 to 162 enclose the S4 RNA-binding domain; sequence RRLDNVLYRM…QKSAFIEENI (64 aa).

This sequence belongs to the universal ribosomal protein uS4 family. In terms of assembly, part of the 30S ribosomal subunit. Contacts protein S5. The interaction surface between S4 and S5 is involved in control of translational fidelity.

Functionally, one of the primary rRNA binding proteins, it binds directly to 16S rRNA where it nucleates assembly of the body of the 30S subunit. With S5 and S12 plays an important role in translational accuracy. The protein is Small ribosomal subunit protein uS4 of Leptospira biflexa serovar Patoc (strain Patoc 1 / Ames).